A 212-amino-acid chain; its full sequence is Large ribosomal subunit protein uL4 (212 aa).

Polar residues predominate over residues 43 to 52 (NNRQGTASTK). The disordered stretch occupies residues 43-77 (NNRQGTASTKTRSEVRGGGRKPWRQKGTGRARAGS). Basic residues predominate over residues 60-71 (GGRKPWRQKGTG).

This sequence belongs to the universal ribosomal protein uL4 family. In terms of assembly, part of the 50S ribosomal subunit.

In terms of biological role, one of the primary rRNA binding proteins, this protein initially binds near the 5'-end of the 23S rRNA. It is important during the early stages of 50S assembly. It makes multiple contacts with different domains of the 23S rRNA in the assembled 50S subunit and ribosome. Functionally, forms part of the polypeptide exit tunnel. The chain is Large ribosomal subunit protein uL4 from Trichodesmium erythraeum (strain IMS101).